The following is a 410-amino-acid chain: Phosphoglycerate kinase (410 aa).

Substrate-binding positions include 19–21 (DLN), Arg-34, 57–60 (HQGK), Arg-114, and Arg-154. ATP is bound by residues Glu-332 and 358 to 361 (GGHS).

Belongs to the phosphoglycerate kinase family. In terms of assembly, homodimer.

The protein resides in the cytoplasm. The enzyme catalyses (2R)-3-phosphoglycerate + ATP = (2R)-3-phospho-glyceroyl phosphate + ADP. It participates in carbohydrate degradation; glycolysis; pyruvate from D-glyceraldehyde 3-phosphate: step 2/5. This is Phosphoglycerate kinase (pgk) from Pyrococcus horikoshii (strain ATCC 700860 / DSM 12428 / JCM 9974 / NBRC 100139 / OT-3).